The chain runs to 131 residues: Small ribosomal subunit protein uS9 (131 aa).

This sequence belongs to the universal ribosomal protein uS9 family.

The sequence is that of Small ribosomal subunit protein uS9 from Mycoplasmopsis synoviae (strain 53) (Mycoplasma synoviae).